A 217-amino-acid polypeptide reads, in one-letter code: tRNA (guanine-N(7)-)-methyltransferase (217 aa).

4 residues coordinate S-adenosyl-L-methionine: glutamate 56, glutamate 81, aspartate 108, and aspartate 130. Aspartate 130 is a catalytic residue. The substrate site is built by lysine 134 and aspartate 166.

This sequence belongs to the class I-like SAM-binding methyltransferase superfamily. TrmB family.

It carries out the reaction guanosine(46) in tRNA + S-adenosyl-L-methionine = N(7)-methylguanosine(46) in tRNA + S-adenosyl-L-homocysteine. The protein operates within tRNA modification; N(7)-methylguanine-tRNA biosynthesis. In terms of biological role, catalyzes the formation of N(7)-methylguanine at position 46 (m7G46) in tRNA. In Neorickettsia sennetsu (strain ATCC VR-367 / Miyayama) (Ehrlichia sennetsu), this protein is tRNA (guanine-N(7)-)-methyltransferase.